A 269-amino-acid chain; its full sequence is Regulatory protein RecX (269 aa).

Belongs to the RecX family.

It localises to the cytoplasm. In terms of biological role, modulates RecA activity. This is Regulatory protein RecX from Listeria monocytogenes serotype 4b (strain CLIP80459).